The sequence spans 227 residues: Probable FKBP-type 25 kDa peptidyl-prolyl cis-trans isomerase (227 aa).

The 84-residue stretch at 144–227 (ATQVHVRYRG…VFEIDLLGFR (84 aa)) folds into the PPIase FKBP-type domain.

This sequence belongs to the FKBP-type PPIase family.

The enzyme catalyses [protein]-peptidylproline (omega=180) = [protein]-peptidylproline (omega=0). Functionally, PPIases accelerate the folding of proteins. The protein is Probable FKBP-type 25 kDa peptidyl-prolyl cis-trans isomerase (fkl) of Pseudomonas aeruginosa (strain ATCC 15692 / DSM 22644 / CIP 104116 / JCM 14847 / LMG 12228 / 1C / PRS 101 / PAO1).